The primary structure comprises 115 residues: Large ribosomal subunit protein P2 (115 aa).

At Met-1 the chain carries N-acetylmethionine. 2 positions are modified to phosphoserine: Ser-17 and Ser-19. Lys-21 is modified (N6-acetyllysine; alternate). Lys-21 carries the post-translational modification N6-succinyllysine; alternate. A compositionally biased stretch (low complexity) spans 69-90 (GAXAVAAAPGSXAPAAGSAPAA). The interval 69–115 (GAXAVAAAPGSXAPAAGSAPAAAEEKKEEKKEESEESDDDMGFGLFD) is disordered. Residues Ser-79 and Ser-86 each carry the phosphoserine modification. A compositionally biased stretch (basic and acidic residues) spans 91-101 (AEEKKEEKKEE). Phosphoserine occurs at positions 102 and 105.

Belongs to the eukaryotic ribosomal protein P1/P2 family. In terms of assembly, heterodimer with RPLP1 at the lateral ribosomal stalk of the large ribosomal subunit.

Plays an important role in the elongation step of protein synthesis. This is Large ribosomal subunit protein P2 (RPLP2) from Sus scrofa (Pig).